A 393-amino-acid polypeptide reads, in one-letter code: Protein FAM47E (393 aa).

Residues 326–354 (VSHKAQEENFKKELQEQEELLADLHGTVA) are a coiled coil.

The protein belongs to the FAM47 family. In terms of assembly, interacts with PRMT5; the interaction is direct. Interacts with WDR77.

Its subcellular location is the nucleus. The protein resides in the chromosome. It localises to the cytoplasm. Functionally, promotes histone methylation by localizing the arginine methyltransferase PRMT5 to chromatin. The polypeptide is Protein FAM47E (FAM47E) (Homo sapiens (Human)).